The following is a 364-amino-acid chain: tRNA (adenine(58)-N(1))-methyltransferase catalytic subunit trm61 (364 aa).

Residues 114–116, Glu-135, Arg-140, 167–168, and Asp-186 each bind S-adenosyl-L-methionine; these read SAS and DV. Residues 280 to 309 form a disordered region; it reads EQNLSSDAKVEDQDNDSMLGENKSSVSTET.

It belongs to the class I-like SAM-binding methyltransferase superfamily. TRM61 family. Heterotetramer; composed of two copies of TRM6 and two copies of TRM61.

It localises to the nucleus. The enzyme catalyses adenosine(58) in tRNA + S-adenosyl-L-methionine = N(1)-methyladenosine(58) in tRNA + S-adenosyl-L-homocysteine + H(+). Catalytic subunit of tRNA (adenine-N(1)-)-methyltransferase, which catalyzes the formation of N(1)-methyladenine at position 58 (m1A58) in initiator methionyl-tRNA. The chain is tRNA (adenine(58)-N(1))-methyltransferase catalytic subunit trm61 (cpd1) from Schizosaccharomyces pombe (strain 972 / ATCC 24843) (Fission yeast).